The primary structure comprises 92 residues: MATTYEEFSAKLDRLGEEFNRKMQEQNAKFFADKPDESTLSPEMKEHYEKFERMIKEHTEKFNKKMHEHSEHFKQKFAELLEQQKAAQYPSK.

This sequence belongs to the KMP-11 family. In terms of assembly, monomer.

Its subcellular location is the cytoplasm. It localises to the cytoskeleton. The protein localises to the cell projection. It is found in the cilium. The protein resides in the flagellum. In terms of biological role, may be involved in the regulation of the cytoskeleton through interaction with the subpellicular microtubules. May be involved in parasite mobility and attachment to the surface of the host cell. Behaves as a strong immunogen during infection. The sequence is that of Kinetoplastid membrane protein 11B (KMP-11B) from Leishmania infantum.